The primary structure comprises 432 residues: Serine hydroxymethyltransferase (432 aa).

(6S)-5,6,7,8-tetrahydrofolate is bound by residues Leu127 and 131–133 (GHL). Lys236 is modified (N6-(pyridoxal phosphate)lysine).

The protein belongs to the SHMT family. Homodimer. The cofactor is pyridoxal 5'-phosphate.

The protein resides in the cytoplasm. It carries out the reaction (6R)-5,10-methylene-5,6,7,8-tetrahydrofolate + glycine + H2O = (6S)-5,6,7,8-tetrahydrofolate + L-serine. It participates in one-carbon metabolism; tetrahydrofolate interconversion. It functions in the pathway amino-acid biosynthesis; glycine biosynthesis; glycine from L-serine: step 1/1. Its function is as follows. Catalyzes the reversible interconversion of serine and glycine with tetrahydrofolate (THF) serving as the one-carbon carrier. This reaction serves as the major source of one-carbon groups required for the biosynthesis of purines, thymidylate, methionine, and other important biomolecules. Also exhibits THF-independent aldolase activity toward beta-hydroxyamino acids, producing glycine and aldehydes, via a retro-aldol mechanism. In Rhizobium rhizogenes (strain K84 / ATCC BAA-868) (Agrobacterium radiobacter), this protein is Serine hydroxymethyltransferase.